We begin with the raw amino-acid sequence, 392 residues long: Histidinol-phosphate aminotransferase 2 (392 aa).

The residue at position 228 (K228) is an N6-(pyridoxal phosphate)lysine.

The protein belongs to the class-II pyridoxal-phosphate-dependent aminotransferase family. Histidinol-phosphate aminotransferase subfamily. As to quaternary structure, homodimer. The cofactor is pyridoxal 5'-phosphate.

The enzyme catalyses L-histidinol phosphate + 2-oxoglutarate = 3-(imidazol-4-yl)-2-oxopropyl phosphate + L-glutamate. Its pathway is amino-acid biosynthesis; L-histidine biosynthesis; L-histidine from 5-phospho-alpha-D-ribose 1-diphosphate: step 7/9. The chain is Histidinol-phosphate aminotransferase 2 from Nitrosospira multiformis (strain ATCC 25196 / NCIMB 11849 / C 71).